The primary structure comprises 612 residues: MAAGGVDVSRSSVAVKKDYDFYRNGSRDVYVRQSGRDDERRQIKRPSDHDLRRNDGRHRSRLAYEKGELREEAEVQRPSEKRRKFSPIVWNAEKVGRAPSREKTKSPFPVPTTTVISNQAVAGKTTSNDQVNALMSPEPSYLAPVQPSEALLAVKHPVDDLEEGQLEEEQVMQEDVKEGLLEEEQVMQEPNIKTSRWGTGLTSPKEELISVNVSKTNRWNRSSLTPECEEVMVSEEQQCYSSGSGSGHLSVEKLSADGNSGREYYSSDHDELEHEDQDSLTPGEMNMMFGSRSVNEFQKLNKINEGTYGIVYKARDEKTKEIVALKKIKMKEDRFEEEYGFPLTSLREINILLSCNHPAIVNVKEVVVGGKNDNDVYMVMEHLEHDLRGVMDRRKEPFSTSEVKCLMMQLLDGLKYLHTNWIIHRDLKPSNLLMNNCGELKICDFGMARQYGSPIKPYTQMVITQWYRPPELLLGAKEYSTAVDMWSVGCIMAELLSQKPLFPGKSELDQLQKIFAVLGTPNEAIWPGFSSFPNAKAKFPTQPYNMLRKKFPAISFVGGQILSERGFDLLNSLLTLDPEKRLTVEDALNHGWFHEVPLPKSKDFMPTYPPKR.

A compositionally biased stretch (basic and acidic residues) spans 26-54 (SRDVYVRQSGRDDERRQIKRPSDHDLRRN). 2 disordered regions span residues 26-60 (SRDV…RHRS) and 239-278 (CYSS…EDQD). The 297-residue stretch at 297 to 593 (FQKLNKINEG…VEDALNHGWF (297 aa)) folds into the Protein kinase domain. ATP is bound by residues 303–311 (INEGTYGIV) and K326. At Y308 the chain carries Phosphotyrosine. The active-site Proton acceptor is the D426. Position 453 is a phosphoserine (S453). A Phosphothreonine modification is found at T459.

The protein belongs to the protein kinase superfamily. Ser/Thr protein kinase family. In terms of assembly, forms a complex with CYCL1-1. Associated with the spliceosome. Interacts with RS2Z33. As to expression, expressed in leaves and inflorescences. Lower levels of expression in roots and stems.

It localises to the nucleus speckle. It catalyses the reaction L-seryl-[protein] + ATP = O-phospho-L-seryl-[protein] + ADP + H(+). The enzyme catalyses L-threonyl-[protein] + ATP = O-phospho-L-threonyl-[protein] + ADP + H(+). Cyclin-dependent kinase involved in pre-mRNA splicing. Required for the correct splicing of the sixth intron of CALS5 pre-mRNA. May stabilize the binding of U1 snRNP to this rare type of intron with a GC 5'SS. Involved in chromosome pairing and is required for the completion of synapsis in male meiocytes at high ambient temperatures. The protein is Cyclin-dependent kinase G1 (CDKG1) of Arabidopsis thaliana (Mouse-ear cress).